Here is an 82-residue protein sequence, read N- to C-terminus: NKRINAMAEDGDPFAKLIVETDTFGSRVRVRGAETGLYICMNKKGKLIAKSNGKGKDCVFTEIELENNYTALQNAKYEGWYM.

N-linked (GlcNAc...) asparagine glycosylation is present at N68.

It belongs to the heparin-binding growth factors family. Monomer. Homodimer. Interacts with FGFR1, FGFR2, FGFR3 and FGFR4. Affinity between fibroblast growth factors (FGFs) and their receptors is increased by heparan sulfate glycosaminoglycans that function as coreceptors.

It is found in the secreted. Functionally, plays an important role in the regulation of embryonic development, cell proliferation, cell differentiation and cell migration. Required for normal brain, eye, ear and limb development during embryogenesis. Required for normal development of the gonadotropin-releasing hormone (GnRH) neuronal system. Plays a role in neurite outgrowth in hippocampal cells. This is Fibroblast growth factor 8 (FGF8) from Canis lupus familiaris (Dog).